The sequence spans 235 residues: UPF0173 metal-dependent hydrolase mll0680 (235 aa).

The protein belongs to the UPF0173 family.

This chain is UPF0173 metal-dependent hydrolase mll0680, found in Mesorhizobium japonicum (strain LMG 29417 / CECT 9101 / MAFF 303099) (Mesorhizobium loti (strain MAFF 303099)).